Here is a 1058-residue protein sequence, read N- to C-terminus: Carbamoyl phosphate synthase large chain (1058 aa).

The carboxyphosphate synthetic domain stretch occupies residues 1–401; sequence MPKRKDIQKI…SLLKACRSLE (401 aa). ATP is bound by residues Arg-129, Arg-169, Gly-175, Gly-176, Arg-208, Ile-210, Glu-215, Gly-241, Ile-242, His-243, Gln-284, and Glu-298. Positions 133-327 constitute an ATP-grasp 1 domain; the sequence is KQLMQELDQP…IAKLAAKIAV (195 aa). Residues Gln-284, Glu-298, and Asn-300 each contribute to the Mg(2+) site. 3 residues coordinate Mn(2+): Gln-284, Glu-298, and Asn-300. Residues 402 to 546 form an oligomerization domain region; it reads IGVCHNEMTS…YSTYELENES (145 aa). The interval 547 to 929 is carbamoyl phosphate synthetic domain; sequence VQSNKESILV…ALYKAFEANN (383 aa). Residues 671 to 861 enclose the ATP-grasp 2 domain; that stretch reads EKALKELGIP…MAQIATKLIL (191 aa). Residues Arg-707, Ser-746, Ile-748, Glu-752, Gly-777, Val-778, His-779, Ser-780, Gln-820, and Glu-832 each contribute to the ATP site. 3 residues coordinate Mg(2+): Gln-820, Glu-832, and Asn-834. Gln-820, Glu-832, and Asn-834 together coordinate Mn(2+). In terms of domain architecture, MGS-like spans 930–1058; sequence SHLSEFGQIV…ESRCFNIEAI (129 aa). Positions 930–1058 are allosteric domain; that stretch reads SHLSEFGQIV…ESRCFNIEAI (129 aa).

The protein belongs to the CarB family. As to quaternary structure, composed of two chains; the small (or glutamine) chain promotes the hydrolysis of glutamine to ammonia, which is used by the large (or ammonia) chain to synthesize carbamoyl phosphate. Tetramer of heterodimers (alpha,beta)4. The cofactor is Mg(2+). It depends on Mn(2+) as a cofactor.

The enzyme catalyses hydrogencarbonate + L-glutamine + 2 ATP + H2O = carbamoyl phosphate + L-glutamate + 2 ADP + phosphate + 2 H(+). The catalysed reaction is hydrogencarbonate + NH4(+) + 2 ATP = carbamoyl phosphate + 2 ADP + phosphate + 2 H(+). It participates in amino-acid biosynthesis; L-arginine biosynthesis; carbamoyl phosphate from bicarbonate: step 1/1. Its pathway is pyrimidine metabolism; UMP biosynthesis via de novo pathway; (S)-dihydroorotate from bicarbonate: step 1/3. In terms of biological role, large subunit of the glutamine-dependent carbamoyl phosphate synthetase (CPSase). CPSase catalyzes the formation of carbamoyl phosphate from the ammonia moiety of glutamine, carbonate, and phosphate donated by ATP, constituting the first step of 2 biosynthetic pathways, one leading to arginine and/or urea and the other to pyrimidine nucleotides. The large subunit (synthetase) binds the substrates ammonia (free or transferred from glutamine from the small subunit), hydrogencarbonate and ATP and carries out an ATP-coupled ligase reaction, activating hydrogencarbonate by forming carboxy phosphate which reacts with ammonia to form carbamoyl phosphate. The chain is Carbamoyl phosphate synthase large chain from Streptococcus pyogenes serotype M49 (strain NZ131).